The following is a 95-amino-acid chain: Co-chaperonin GroES (95 aa).

The protein belongs to the GroES chaperonin family. In terms of assembly, heptamer of 7 subunits arranged in a ring. Interacts with the chaperonin GroEL.

The protein resides in the cytoplasm. Together with the chaperonin GroEL, plays an essential role in assisting protein folding. The GroEL-GroES system forms a nano-cage that allows encapsulation of the non-native substrate proteins and provides a physical environment optimized to promote and accelerate protein folding. GroES binds to the apical surface of the GroEL ring, thereby capping the opening of the GroEL channel. This is Co-chaperonin GroES from Rickettsia bellii (strain RML369-C).